Here is a 289-residue protein sequence, read N- to C-terminus: Inorganic pyrophosphatase (289 aa).

At Ser-2 the chain carries N-acetylserine. An N6-acetyllysine modification is found at Lys-57. The Mg(2+) site is built by Asp-116, Asp-121, and Asp-153. Lys-228 bears the N6-acetyllysine mark. Position 250 is a phosphoserine (Ser-250).

This sequence belongs to the PPase family. As to quaternary structure, homodimer. Requires Mg(2+) as cofactor.

It is found in the cytoplasm. It catalyses the reaction diphosphate + H2O = 2 phosphate + H(+). The sequence is that of Inorganic pyrophosphatase (Ppa1) from Mus musculus (Mouse).